A 658-amino-acid polypeptide reads, in one-letter code: uncharacterized protein (658 aa).

Positions 516–639 are enriched in low complexity; the sequence is SSNNSNSSNN…NNNNNSSQGG (124 aa). The disordered stretch occupies residues 516-646; it reads SSNNSNSSNN…QGGNSQGGSG (131 aa).

It is found in the cytoplasm. This is an uncharacterized protein from Schizosaccharomyces pombe (strain 972 / ATCC 24843) (Fission yeast).